The following is a 192-amino-acid chain: Ribosomal RNA small subunit methyltransferase G (192 aa).

Residues Gly63, Phe68, 112–113 (IE), and Arg125 contribute to the S-adenosyl-L-methionine site.

It belongs to the methyltransferase superfamily. RNA methyltransferase RsmG family.

The protein resides in the cytoplasm. The catalysed reaction is guanosine(527) in 16S rRNA + S-adenosyl-L-methionine = N(7)-methylguanosine(527) in 16S rRNA + S-adenosyl-L-homocysteine. Functionally, specifically methylates the N7 position of guanine in position 527 of 16S rRNA. The polypeptide is Ribosomal RNA small subunit methyltransferase G (Rickettsia felis (strain ATCC VR-1525 / URRWXCal2) (Rickettsia azadi)).